Consider the following 193-residue polypeptide: Phosphoheptose isomerase (193 aa).

Residues 37 to 193 (LADSFKAGGK…QLIEKEMVKA (157 aa)) enclose the SIS domain. 52–54 (NGG) is a binding site for substrate. Zn(2+) is bound by residues H61 and E65. Residues E65, 93-94 (ND), 119-121 (STS), S124, and Q172 each bind substrate. Zn(2+)-binding residues include Q172 and H180.

The protein belongs to the SIS family. GmhA subfamily. In terms of assembly, homotetramer. It depends on Zn(2+) as a cofactor.

The protein resides in the cytoplasm. The catalysed reaction is 2 D-sedoheptulose 7-phosphate = D-glycero-alpha-D-manno-heptose 7-phosphate + D-glycero-beta-D-manno-heptose 7-phosphate. It functions in the pathway carbohydrate biosynthesis; D-glycero-D-manno-heptose 7-phosphate biosynthesis; D-glycero-alpha-D-manno-heptose 7-phosphate and D-glycero-beta-D-manno-heptose 7-phosphate from sedoheptulose 7-phosphate: step 1/1. In terms of biological role, catalyzes the isomerization of sedoheptulose 7-phosphate in D-glycero-D-manno-heptose 7-phosphate. The sequence is that of Phosphoheptose isomerase from Yersinia enterocolitica serotype O:8 / biotype 1B (strain NCTC 13174 / 8081).